The chain runs to 278 residues: D-aminoacyl-tRNA deacylase (278 aa).

It belongs to the DtdA deacylase family. Monomer. Requires Zn(2+) as cofactor.

The enzyme catalyses a D-aminoacyl-tRNA + H2O = a tRNA + a D-alpha-amino acid + H(+). It catalyses the reaction glycyl-tRNA(Ala) + H2O = tRNA(Ala) + glycine + H(+). In terms of biological role, D-aminoacyl-tRNA deacylase with broad substrate specificity. By recycling D-aminoacyl-tRNA to D-amino acids and free tRNA molecules, this enzyme counteracts the toxicity associated with the formation of D-aminoacyl-tRNA entities in vivo. The polypeptide is D-aminoacyl-tRNA deacylase (Archaeoglobus fulgidus (strain ATCC 49558 / DSM 4304 / JCM 9628 / NBRC 100126 / VC-16)).